A 577-amino-acid polypeptide reads, in one-letter code: Isocitrate dehydrogenase kinase/phosphatase (577 aa).

ATP-binding positions include 318-324 and K339; that span reads APGVRGM. D374 is an active-site residue.

This sequence belongs to the AceK family.

It is found in the cytoplasm. It catalyses the reaction L-seryl-[isocitrate dehydrogenase] + ATP = O-phospho-L-seryl-[isocitrate dehydrogenase] + ADP + H(+). Its function is as follows. Bifunctional enzyme which can phosphorylate or dephosphorylate isocitrate dehydrogenase (IDH) on a specific serine residue. This is a regulatory mechanism which enables bacteria to bypass the Krebs cycle via the glyoxylate shunt in response to the source of carbon. When bacteria are grown on glucose, IDH is fully active and unphosphorylated, but when grown on acetate or ethanol, the activity of IDH declines drastically concomitant with its phosphorylation. This is Isocitrate dehydrogenase kinase/phosphatase from Pseudomonas aeruginosa (strain ATCC 15692 / DSM 22644 / CIP 104116 / JCM 14847 / LMG 12228 / 1C / PRS 101 / PAO1).